The primary structure comprises 3828 residues: Histone-lysine N-methyltransferase trithorax (3828 aa).

3 disordered regions span residues 25 to 179 (EDEA…AAAA), 356 to 390 (AVKS…ATKQ), and 512 to 589 (FRKQ…RSTR). A compositionally biased stretch (low complexity) spans 29–57 (ASAAAAAAAATAATTEQHQQSEQSAGSSA). The span at 77 to 89 (AATSGNRGASSGA) shows a compositional bias: polar residues. A compositionally biased stretch (low complexity) spans 101–114 (GNGSSTGSKTTNGG). A compositionally biased stretch (acidic residues) spans 152-165 (DGTEDTNNDDDDDS). Low complexity predominate over residues 359–387 (SSGSSPNPNHNPNAVAGSTSAAAPGAPTA). The segment covering 513 to 523 (RKQEPQHKTPE) has biased composition (basic and acidic residues). The span at 524-553 (DNDDDGSASSDAIEDDEDIDDDDAEENEEA) shows a compositional bias: acidic residues. Residues 554–581 (ASEKSAETTASVDEKEADDRQLVMDKHF) show a composition bias toward basic and acidic residues. The segment at residues 725-839 (ASTCAVCSAP…AGHRSRLSAI (115 aa)) is a DNA-binding region (nuclear receptor). Disordered regions lie at residues 933–1036 (ESKE…SAVP), 1075–1094 (ELAA…TTSP), and 1131–1170 (AQPA…TTRN). Over residues 960–974 (AKQDKEKARELEAEK) the composition is skewed to basic and acidic residues. Low complexity-rich tracts occupy residues 998-1022 (ASTT…TNSS) and 1078-1094 (AAEA…TTSP). A compositionally biased stretch (polar residues) spans 1140-1170 (ESRSSKSNTQTEAKKTPATSGSSKGKVTTRN). 3 consecutive PHD-type zinc fingers follow at residues 1251–1334 (RALC…CTVC), 1335–1380 (YTCN…CLKC), and 1408–1469 (GNFC…CARR). Residues 1483–1644 (AVMEEFKSSL…SEQFPWFQNE (162 aa)) form the Bromo domain. Residues 1708 to 1748 (TRVCLFCRKSGEGLSGEEARLLYCGHDCWVHINCAMWSAEV) form a C2HC pre-PHD-type zinc finger. The segment at 1769-1816 (IKCTVCGNRGATVGCNVKSCGEHYHYPCARTIDCAFLTDKSMYCPAHA) adopts a PHD-type 4 zinc-finger fold. Residues 1856-1913 (KVQFHIGSVAVRQLGSIVPRFSDSFEAIVPINFLCSRLYWSSKEPWKIVEYTVRTTIQ) enclose the FYR N-terminal domain. Disordered stretches follow at residues 2252–2272 (CEPM…AQLS), 2464–2510 (AHQK…QQQQ), 2826–2848 (RNTN…PQQS), 2897–2973 (RQQQ…SPAA), 2988–3031 (APAP…QLSM), 3117–3178 (ASAN…VPAG), 3314–3338 (NGSG…DDDD), and 3457–3487 (KLDV…PMRD). Composition is skewed to low complexity over residues 2253–2268 (EPMS…ATGT), 2483–2510 (QGQQ…QQQQ), and 2836–2848 (SVLS…PQQS). A compositionally biased stretch (polar residues) spans 2897-2917 (RQQQANELKNKQAAGQQTGST). 4 stretches are compositionally biased toward low complexity: residues 2956-2973 (ATSA…SPAA), 2988-2997 (APAPQPQQQE), 3005-3031 (LHQQ…QLSM), and 3117-3132 (ASAN…QQNS). Residues 3148–3164 (QQRQEPTPLSNDVVVQS) are compositionally biased toward polar residues. Over residues 3328-3338 (DDAEEDEDDDD) the composition is skewed to acidic residues. An FYR C-terminal domain is found at 3493 to 3577 (GPHLLYEIQS…EKCVKYTPKY (85 aa)). The region spanning 3690–3806 (DYVGVFRSHI…QGEELTYDYK (117 aa)) is the SET domain. Residues H3700, R3702, Y3744, and 3767–3768 (NH) each bind S-adenosyl-L-methionine. Residues C3770, C3816, C3818, and C3823 each coordinate Zn(2+). In terms of domain architecture, Post-SET spans 3812–3828 (EKIPCSCGSKRCRKYLN).

This sequence belongs to the class V-like SAM-binding methyltransferase superfamily. Histone-lysine methyltransferase family. TRX/MLL subfamily. In terms of assembly, interacts with ash1 via its SET domain.

The protein localises to the nucleus. It carries out the reaction L-lysyl(9)-[histone H3] + 3 S-adenosyl-L-methionine = N(6),N(6),N(6)-trimethyl-L-lysyl(9)-[histone H3] + 3 S-adenosyl-L-homocysteine + 3 H(+). Functionally, histone methyltransferase that methylates 'Lys-4' of histone H3 (H3K4me). H3K4me represents a specific tag for epigenetic transcriptional activation. Functions in segment determination through interaction with genes of bithorax (BX-C) and antennapedia (ANT-C) complexes. Acts as an activator of BX-C. Involved in the very early regulation of homeotic genes expressed only in the posterior region of the embryo. This Drosophila virilis (Fruit fly) protein is Histone-lysine N-methyltransferase trithorax (trx).